The sequence spans 342 residues: Probable tyrosine--tRNA ligase, cytoplasmic (342 aa).

Position 48 (Y48) interacts with L-tyrosine. The 'HIGH' region motif lies at 53–61 (ITGKPHIGY). Residues Y175, Q179, D182, and Q197 each contribute to the L-tyrosine site. Residues 231–235 (KMSSS) carry the 'KMSKS' region motif.

Belongs to the class-I aminoacyl-tRNA synthetase family. In terms of assembly, homodimer.

It localises to the cytoplasm. It carries out the reaction tRNA(Tyr) + L-tyrosine + ATP = L-tyrosyl-tRNA(Tyr) + AMP + diphosphate + H(+). This chain is Probable tyrosine--tRNA ligase, cytoplasmic, found in Enterocytozoon bieneusi (strain H348) (Microsporidian parasite).